A 501-amino-acid chain; its full sequence is Glutamate--tRNA ligase (501 aa).

Residues 11–21 carry the 'HIGH' region motif; the sequence is PSPTGPLHIGG. A 'KMSKS' region motif is present at residues 260–264; sequence KLSKR. Residue Lys-263 participates in ATP binding.

The protein belongs to the class-I aminoacyl-tRNA synthetase family. Glutamate--tRNA ligase type 1 subfamily. In terms of assembly, monomer.

Its subcellular location is the cytoplasm. The enzyme catalyses tRNA(Glu) + L-glutamate + ATP = L-glutamyl-tRNA(Glu) + AMP + diphosphate. In terms of biological role, catalyzes the attachment of glutamate to tRNA(Glu) in a two-step reaction: glutamate is first activated by ATP to form Glu-AMP and then transferred to the acceptor end of tRNA(Glu). The protein is Glutamate--tRNA ligase of Flavobacterium johnsoniae (strain ATCC 17061 / DSM 2064 / JCM 8514 / BCRC 14874 / CCUG 350202 / NBRC 14942 / NCIMB 11054 / UW101) (Cytophaga johnsonae).